Reading from the N-terminus, the 157-residue chain is Large ribosomal subunit protein uL10 (157 aa).

The protein belongs to the universal ribosomal protein uL10 family. Part of the ribosomal stalk of the 50S ribosomal subunit. The N-terminus interacts with L11 and the large rRNA to form the base of the stalk. The C-terminus forms an elongated spine to which L12 dimers bind in a sequential fashion forming a multimeric L10(L12)X complex.

In terms of biological role, forms part of the ribosomal stalk, playing a central role in the interaction of the ribosome with GTP-bound translation factors. The chain is Large ribosomal subunit protein uL10 from Campylobacter hominis (strain ATCC BAA-381 / DSM 21671 / CCUG 45161 / LMG 19568 / NCTC 13146 / CH001A).